Consider the following 293-residue polypeptide: MKEAEVLKYEAFTSSPGKGNPAGVVLQGDDYTEDEMQIIAERAGYSETSFIRKSESADLELRYFTPGHEMNLCGHATVASLYALCEKGMLESGKTYSIQTKAGILPVKISEKDGRIHITLEQASPQFKPFTGDRKKLADALGITDEDFHEDLPIVFGSTGIWTAIVPLKSLEASKKMVPDNKQFPEVLVDLPKASVHPFTFETVHPDSDLHGRHFSSPYSGTIEDPVTGTASGVMGAYMKHYGNAEQHKFIIEQGQEIGKDGKVEIEMNEAGGHVKVNMTGTAVYSETRILKI.

The active site involves Glu47.

It belongs to the PhzF family.

This is an uncharacterized protein from Bacillus subtilis (strain 168).